The primary structure comprises 579 residues: CTP synthase (579 aa).

Positions 310–558 constitute a Glutamine amidotransferase type-1 domain; that stretch reads YVELHDAYLS…VAAAIGCLDQ (249 aa). Active-site for GATase activity residues include Cys-402, His-531, and Glu-533.

It belongs to the CTP synthase family.

The enzyme catalyses UTP + L-glutamine + ATP + H2O = CTP + L-glutamate + ADP + phosphate + 2 H(+). The protein operates within pyrimidine metabolism; CTP biosynthesis via de novo pathway; CTP from UDP: step 2/2. In terms of biological role, catalyzes the ATP-dependent amination of UTP to CTP with either L-glutamine or ammonia as the source of nitrogen. The protein is CTP synthase (pyr-7) of Neurospora crassa (strain ATCC 24698 / 74-OR23-1A / CBS 708.71 / DSM 1257 / FGSC 987).